Reading from the N-terminus, the 310-residue chain is Light-independent protochlorophyllide reductase iron-sulfur ATP-binding protein (310 aa).

Residues 53–58 and K82 contribute to the ATP site; that span reads GIGKST. S57 is a Mg(2+) binding site. [4Fe-4S] cluster is bound by residues C138 and C172. Residues 223–224 and 247–249 each bind ATP; these read NR and PAL.

The protein belongs to the NifH/BchL/ChlL family. As to quaternary structure, homodimer. Protochlorophyllide reductase is composed of three subunits; BchL, BchN and BchB. It depends on [4Fe-4S] cluster as a cofactor.

It catalyses the reaction chlorophyllide a + oxidized 2[4Fe-4S]-[ferredoxin] + 2 ADP + 2 phosphate = protochlorophyllide a + reduced 2[4Fe-4S]-[ferredoxin] + 2 ATP + 2 H2O. The protein operates within porphyrin-containing compound metabolism; bacteriochlorophyll biosynthesis (light-independent). In terms of biological role, component of the dark-operative protochlorophyllide reductase (DPOR) that uses Mg-ATP and reduced ferredoxin to reduce ring D of protochlorophyllide (Pchlide) to form chlorophyllide a (Chlide). This reaction is light-independent. The L component serves as a unique electron donor to the NB-component of the complex, and binds Mg-ATP. In Rhodopseudomonas palustris (strain BisA53), this protein is Light-independent protochlorophyllide reductase iron-sulfur ATP-binding protein.